Here is a 149-residue protein sequence, read N- to C-terminus: Calmodulin-2 (149 aa).

Ala2 is modified (N-acetylalanine). 4 EF-hand domains span residues 8–43, 44–79, 81–116, and 117–149; these read EQIA…LGQN, PTEA…KMKD, DSEE…LGEK, and LTDE…MLAK. Ca(2+) contacts are provided by Asp21, Asp23, Asp25, Cys27, Glu32, Asp57, Asp59, Asn61, Thr63, Glu68, Asp94, Asp96, Asn98, Tyr100, and Asp105. Residue Lys116 is modified to N6,N6,N6-trimethyllysine. 5 residues coordinate Ca(2+): Asp130, Asp132, Asp134, Gln136, and Glu141.

Belongs to the calmodulin family.

Its function is as follows. Calmodulin mediates the control of a large number of enzymes, ion channels and other proteins by Ca(2+). Among the enzymes to be stimulated by the calmodulin-Ca(2+) complex are a number of protein kinases and phosphatases. The chain is Calmodulin-2 (CAM72) from Petunia hybrida (Petunia).